Consider the following 480-residue polypeptide: NADH-quinone oxidoreductase subunit N (480 aa).

The next 14 membrane-spanning stretches (helical) occupy residues 12-32, 41-61, 80-100, 105-125, 130-150, 165-185, 204-224, 237-257, 275-295, 300-320, 326-346, 372-392, 406-428, and 450-470; these read LLIP…LGVF, LVQW…LFLV, FSKT…MPYL, LGKI…MMMV, LIAM…LAAF, FVLG…VYGF, IGLT…VSAA, APTP…IVLL, VIWM…LTQQ, LMAY…AAAS, ALLV…ATIL, GWSM…VGFF, LMIL…LRIV, and IARI…WLVF.

This sequence belongs to the complex I subunit 2 family. NDH-1 is composed of 14 different subunits. Subunits NuoA, H, J, K, L, M, N constitute the membrane sector of the complex.

The protein resides in the cell inner membrane. It catalyses the reaction a quinone + NADH + 5 H(+)(in) = a quinol + NAD(+) + 4 H(+)(out). In terms of biological role, NDH-1 shuttles electrons from NADH, via FMN and iron-sulfur (Fe-S) centers, to quinones in the respiratory chain. The immediate electron acceptor for the enzyme in this species is believed to be ubiquinone. Couples the redox reaction to proton translocation (for every two electrons transferred, four hydrogen ions are translocated across the cytoplasmic membrane), and thus conserves the redox energy in a proton gradient. This is NADH-quinone oxidoreductase subunit N from Maricaulis maris (strain MCS10) (Caulobacter maris).